Reading from the N-terminus, the 721-residue chain is Peroxisomal fatty acid beta-oxidation multifunctional protein AIM1 (721 aa).

Glu-116 serves as the catalytic Nucleophile. Glu-136 acts as the Proton acceptor in catalysis. The Microbody targeting signal signature appears at 719-721; the sequence is SKL.

This sequence in the N-terminal section; belongs to the enoyl-CoA hydratase/isomerase family. The protein in the central section; belongs to the 3-hydroxyacyl-CoA dehydrogenase family. In terms of tissue distribution, widely expressed.

It is found in the peroxisome. It carries out the reaction a (3S)-3-hydroxyacyl-CoA = a (2E)-enoyl-CoA + H2O. It catalyses the reaction a 4-saturated-(3S)-3-hydroxyacyl-CoA = a (3E)-enoyl-CoA + H2O. The enzyme catalyses (3S)-3-hydroxybutanoyl-CoA = (2E)-butenoyl-CoA + H2O. The catalysed reaction is (3S)-hydroxyoctanoyl-CoA = (2E)-octenoyl-CoA + H2O. It carries out the reaction (3S)-3-hydroxydodecanoyl-CoA = (2E)-dodecenoyl-CoA + H2O. It catalyses the reaction (3S)-hydroxytetradecanoyl-CoA = (2E)-tetradecenoyl-CoA + H2O. The enzyme catalyses (3S)-hydroxyhexanoyl-CoA = (2E)-hexenoyl-CoA + H2O. The catalysed reaction is a (3Z)-enoyl-CoA = a 4-saturated (2E)-enoyl-CoA. It carries out the reaction a (3E)-enoyl-CoA = a 4-saturated (2E)-enoyl-CoA. It catalyses the reaction (3S)-3-hydroxybutanoyl-CoA = (3R)-3-hydroxybutanoyl-CoA. The enzyme catalyses a (3S)-3-hydroxyacyl-CoA + NAD(+) = a 3-oxoacyl-CoA + NADH + H(+). The catalysed reaction is (3S)-3-hydroxybutanoyl-CoA + NAD(+) = acetoacetyl-CoA + NADH + H(+). It carries out the reaction (3S)-hydroxyhexanoyl-CoA + NAD(+) = 3-oxohexanoyl-CoA + NADH + H(+). It catalyses the reaction (3S)-hydroxyoctanoyl-CoA + NAD(+) = 3-oxooctanoyl-CoA + NADH + H(+). The enzyme catalyses (3S)-3-hydroxydodecanoyl-CoA + NAD(+) = 3-oxododecanoyl-CoA + NADH + H(+). The catalysed reaction is (3S)-hydroxytetradecanoyl-CoA + NAD(+) = 3-oxotetradecanoyl-CoA + NADH + H(+). Its pathway is lipid metabolism; fatty acid beta-oxidation. Its function is as follows. Involved in peroxisomal fatty acid beta-oxidation. Required for wound-induced jasmonate biosynthesis. Possesses enoyl-CoA hydratase activity against short chain substrates (C4-C6) and 3-hydroxyacyl-CoA dehydrogenase activity against chains of variable sizes (C6-C16). Possesses cinnamoyl-CoA hydratase activity and is involved in the peroxisomal beta-oxidation pathway for the biosynthesis of benzoic acid (BA). Required for the accumulation in seeds of benzoylated glucosinolates (BGs) and substituted hydroxybenzoylated choline esters, which are BA-containing secondary metabolites. Required for salicylic acid (SA) in seeds. This chain is Peroxisomal fatty acid beta-oxidation multifunctional protein AIM1 (AIM1), found in Arabidopsis thaliana (Mouse-ear cress).